Here is a 458-residue protein sequence, read N- to C-terminus: COBRA-like protein 2 (458 aa).

The N-terminal stretch at 1 to 29 (MARFLLGAAAIALLAGVSSLLLMVPFAEA) is a signal peptide. N-linked (GlcNAc...) asparagine glycosylation is found at Asn-38, Asn-163, Asn-171, Asn-211, Asn-236, Asn-318, Asn-333, and Asn-352. The chain crosses the membrane as a helical span at residues 430-450 (VFLLMSFLVCGTLAFLHNHLV).

This sequence belongs to the COBRA family.

It localises to the membrane. In Oryza sativa subsp. japonica (Rice), this protein is COBRA-like protein 2 (BC1L2).